Reading from the N-terminus, the 346-residue chain is Actin-like protein 10 (346 aa).

Belongs to the actin family.

The polypeptide is Actin-like protein 10 (Actl10) (Mus musculus (Mouse)).